The following is a 1316-amino-acid chain: MLDVNFFDELRIGLATAEDIRQWSYGEVKKPETINYRTLKPEKDGLFCEKIFGPTRDWECYCGKYKRVPFKGIICERCGVEVTRAKVRRERMGHIELAAPVTHIWYFKGVPSRLGYLLDLAPKDLEKIIYFAAYVITSVDEEMRHNELSTLEAEMAVERKAVEDQRDGELEARAQKLEADLAELEAEGAKADARRKVRDGGEREMRQIRDRAQRELDRLEDIWSTFTKLAPKQLIVDENLYRELVDRYGEYFTGAMGAESIQKLIENFDIDAEAESLRDVIRNGKGQKKLRALKRLKVVAAFQQSGNSPMGMVLDAVPVIPPELRPMVQLDGGRFATSDLNDLYRRVINRNNRLKRLIDLGAPEIIVNNEKRMLQESVDALFDNGRRGRPVTGPGNRPLKSLSDLLKGKQGRFRQNLLGKRVDYSGRSVIVVGPQLKLHQCGLPKLMALELFKPFVMKRLVDLNHAQNIKSAKRMVERQRPQVWDVLEEVIAEHPVLLNRAPTLHRLGIQAFEPMLVEGKAIQLHPLVCEAFNADFDGDQMAVHLPLSAEAQAEARILMLSSNNILSPASGRPLAMPRLDMVTGLYYLTTEVPGDTGEYQPASGDHPETGVYSSPAEAIMAADRGVLSVRAKIKVRLTQLRPPVEIEAELFGHSGWQPGDAWMAETTLGRVMFNELLPLGYPFVNKQMHKKVQAAIINDLAERYPMIVVAQTVDKLKDAGFYWATRSGVTVSMADVLVPPRKKEILDHYEERADKVEKQFQRGALNHDERNEALVEIWKEATDEVGQALREHYPDDNPIITIVDSGATGNFTQTRTLAGMKGLVTNPKGEFIPRPVKSSFREGLTVLEYFINTHGARKGLADTALRTADSGYLTRRLVDVSQDVIVREHDCQTERGIVVELAERAPDGTLIRDPYIETSAYARTLGTDAVDEAGNVIVERGQDLGDPEIDALLAAGITQVKVRSVLTCATSTGVCATCYGRSMATGKLVDIGEAVGIVAAQSIGEPGTQLTMRTFHQGGVGEDITGGLPRVQELFEARVPRGKAPIADVTGRVRLEDGERFYKITIVPDDGGEEVVYDKISKRQRLRVFKHEDGSERVLSDGDHVEVGQQLMEGSADPHEVLRVQGPREVQIHLVREVQEVYRAQGVSIHDKHIEVIVRQMLRRVTIIDSGSTEFLPGSLIDRAEFEAENRRVVAEGGEPAAGRPVLMGITKASLATDSWLSAASFQETTRVLTDAAINCRSDKLNGLKENVIIGKLIPAGTGINRYRNIAVQPTEEARAAAYTIPSYEDQYYSPDFGAATGAAVPLDDYGYSDYR.

The Zn(2+) site is built by Cys60, Cys62, Cys75, and Cys78. Residues Asp535, Asp537, and Asp539 each coordinate Mg(2+). Residues Cys891, Cys968, Cys975, and Cys978 each coordinate Zn(2+).

The protein belongs to the RNA polymerase beta' chain family. In terms of assembly, the RNAP catalytic core consists of 2 alpha, 1 beta, 1 beta' and 1 omega subunit. When a sigma factor is associated with the core the holoenzyme is formed, which can initiate transcription. Mg(2+) serves as cofactor. Requires Zn(2+) as cofactor.

It carries out the reaction RNA(n) + a ribonucleoside 5'-triphosphate = RNA(n+1) + diphosphate. In terms of biological role, DNA-dependent RNA polymerase catalyzes the transcription of DNA into RNA using the four ribonucleoside triphosphates as substrates. In Mycobacterium bovis (strain BCG / Pasteur 1173P2), this protein is DNA-directed RNA polymerase subunit beta'.